A 445-amino-acid polypeptide reads, in one-letter code: ATP-dependent protease ATPase subunit HslU (445 aa).

Residues Ile-17, 59–64, Asp-254, Glu-319, and Arg-391 contribute to the ATP site; that span reads GVGKTE.

The protein belongs to the ClpX chaperone family. HslU subfamily. In terms of assembly, a double ring-shaped homohexamer of HslV is capped on each side by a ring-shaped HslU homohexamer. The assembly of the HslU/HslV complex is dependent on binding of ATP.

It is found in the cytoplasm. Functionally, ATPase subunit of a proteasome-like degradation complex; this subunit has chaperone activity. The binding of ATP and its subsequent hydrolysis by HslU are essential for unfolding of protein substrates subsequently hydrolyzed by HslV. HslU recognizes the N-terminal part of its protein substrates and unfolds these before they are guided to HslV for hydrolysis. The polypeptide is ATP-dependent protease ATPase subunit HslU (Pseudomonas fluorescens (strain SBW25)).